The chain runs to 626 residues: Basic helix-loop-helix ARNT-like protein 1 (626 aa).

Positions 1–60 (MADQRMDISSTISDFMSPGPTDLLSSSLGTSGVDCNRKRKGSSTDYQESMDTDKDDPHGR) are disordered. A Phosphoserine; by GSK3-beta modification is found at S17. Over residues 17-32 (SPGPTDLLSSSLGTSG) the composition is skewed to low complexity. At T21 the chain carries Phosphothreonine; by GSK3-beta. The short motif at 36–41 (NRKRKG) is the Nuclear localization signal element. Basic and acidic residues predominate over residues 51–60 (DTDKDDPHGR). The region spanning 72–125 (NAREAHSQIEKRRRDKMNSFIDELASLVPTCNAMSRKLDKLTVLRMAVQHMKTL) is the bHLH domain. A Phosphoserine modification is found at S78. S90 carries the phosphoserine; by CK2 modification. Positions 142-152 (LSDDELKHLIL) match the Nuclear export signal 1 motif. In terms of domain architecture, PAS 1 spans 143-215 (SDDELKHLIL…EQLSSSDTAP (73 aa)). K252 participates in a covalent cross-link: Glycyl lysine isopeptide (Lys-Gly) (interchain with G-Cter in SUMO2 and SUMO3). K259 is covalently cross-linked (Glycyl lysine isopeptide (Lys-Gly) (interchain with G-Cter in SUMO); alternate). K259 participates in a covalent cross-link: Glycyl lysine isopeptide (Lys-Gly) (interchain with G-Cter in SUMO2); alternate. The 71-residue stretch at 326 to 396 (PQPAGGDIKV…ECHRQVLQTR (71 aa)) folds into the PAS 2 domain. The short motif at 361–369 (LAYLPQELL) is the Nuclear export signal 2 element. Residues 402–445 (NCYKFKIKDGSFITLRSRWFSFMNPWTKEVEYIVSTNTVVLANV) form the PAC domain. Disordered stretches follow at residues 458 to 493 (ASPH…AGAG) and 511 to 596 (GSSP…PSND). Positions 484–493 (IPGGTRAGAG) are enriched in gly residues. An interaction with CIART region spans residues 508–588 (RIRGSSPSSC…ISIDMIDNDQ (81 aa)). Residues 511-521 (GSSPSSCGSSP) are compositionally biased toward low complexity. K538 is modified (N6-acetyllysine).

As to quaternary structure, component of the circadian clock oscillator which includes the CRY1/2 proteins, CLOCK or NPAS2, BMAL1 or BMAL2, CSNK1D and/or CSNK1E, TIMELESS and the PER1/2/3 proteins. Forms a heterodimer with CLOCK. The CLOCK-BMAL1 heterodimer is required for E-box-dependent transactivation, for CLOCK nuclear translocation and degradation, and, for phosphorylation of both CLOCK and BMAL1. Part of a nuclear complex which also includes RACK1 and PRKCA; RACK1 and PRKCA are recruited to the complex in a circadian manner. Interacts with NPAS2. Interacts with EZH2. Interacts with SUMO3. Interacts with SIRT1. Interacts with AHR. Interacts with ID1, ID2 and ID3. Interacts with DDX4. Interacts with OGT. Interacts with EED and SUZ12. Interacts with MTA1. Interacts with CIART. Interacts with HSP90. Interacts with KAT2B and EP300. Interacts with BHLHE40/DEC1 and BHLHE41/DEC2. Interacts with RELB and the interaction is enhanced in the presence of CLOCK. Interacts with PER1, PER2, CRY1 and CRY2 and this interaction requires a translocation to the nucleus. Interaction of the CLOCK-BMAL1 heterodimer with PER or CRY inhibits transcription activation. Interaction of the CLOCK-BMAL1 with CRY1 is independent of DNA but with PER2 is off DNA. The CLOCK-BMAL1 heterodimer interacts with GSK3B. Interacts with KDM5A. Interacts with KMT2A; in a circadian manner. Interacts with UBE3A. Interacts with PRKCG. Interacts with MAGEL2. Interacts with NCOA2. Interacts with THRAP3. The CLOCK-BMAL1 heterodimer interacts with PASD1. Interacts with PASD1. Interacts with USP9X. Interacts with PIWIL2 (via PIWI domain). Interacts with HDAC3. Interacts with HNF4A. Post-translationally, ubiquitinated, leading to its proteasomal degradation. Deubiquitinated by USP9X. In terms of processing, O-glycosylated; contains O-GlcNAc. O-glycosylation by OGT prevents protein degradation by inhibiting ubiquitination. It also stabilizes the CLOCK-BMAL1 heterodimer thereby increasing CLOCK-BMAL1-mediated transcription of genes in the negative loop of the circadian clock such as PER1/2/3 and CRY1/2. Acetylated on Lys-538 by CLOCK during the repression phase of the circadian cycle. Acetylation facilitates recruitment of CRY1 protein and initiates the repression phase of the circadian cycle. Acetylated at Lys-538 by KAT5 during the activation phase of the cycle, leading to recruitment of the positive transcription elongation factor b (P-TEFb) and BRD4, followed by productive elongation of circadian transcripts. Deacetylated by SIRT1, which may result in decreased protein stability. Post-translationally, phosphorylated upon dimerization with CLOCK. Phosphorylation enhances the transcriptional activity, alters the subcellular localization and decreases the stability of the CLOCK-BMAL1 heterodimer by promoting its degradation. Phosphorylation shows circadian variations in the liver with a peak between CT10 to CT14. Phosphorylation at Ser-90 by CK2 is essential for its nuclear localization, its interaction with CLOCK and controls CLOCK nuclear entry. Dephosphorylation at Ser-78 is important for dimerization with CLOCK and transcriptional activity. In terms of processing, sumoylated on Lys-259 upon dimerization with CLOCK. Predominantly conjugated to poly-SUMO2/3 rather than SUMO1 and the level of these conjugates undergo rhythmic variation, peaking at CT9-CT12. Sumoylation localizes it exclusively to the PML body and promotes its ubiquitination in the PML body, ubiquitin-dependent proteasomal degradation and the transcriptional activity of the CLOCK-BMAL1 heterodimer. Undergoes lysosome-mediated degradation in a time-dependent manner in the liver. As to expression, highly expressed in the suprachiasmatic nucleus (SCN). Also expressed in all other tissues examined including kidney, intestine, liver, heart, spleen, brain, muscle, lung, harderian gland and eye. Low expression in kidney and spleen.

It is found in the nucleus. The protein localises to the cytoplasm. Its subcellular location is the PML body. In terms of biological role, transcriptional activator which forms a core component of the circadian clock. The circadian clock, an internal time-keeping system, regulates various physiological processes through the generation of approximately 24 hour circadian rhythms in gene expression, which are translated into rhythms in metabolism and behavior. It is derived from the Latin roots 'circa' (about) and 'diem' (day) and acts as an important regulator of a wide array of physiological functions including metabolism, sleep, body temperature, blood pressure, endocrine, immune, cardiovascular, and renal function. Consists of two major components: the central clock, residing in the suprachiasmatic nucleus (SCN) of the brain, and the peripheral clocks that are present in nearly every tissue and organ system. Both the central and peripheral clocks can be reset by environmental cues, also known as Zeitgebers (German for 'timegivers'). The predominant Zeitgeber for the central clock is light, which is sensed by retina and signals directly to the SCN. The central clock entrains the peripheral clocks through neuronal and hormonal signals, body temperature and feeding-related cues, aligning all clocks with the external light/dark cycle. Circadian rhythms allow an organism to achieve temporal homeostasis with its environment at the molecular level by regulating gene expression to create a peak of protein expression once every 24 hours to control when a particular physiological process is most active with respect to the solar day. Transcription and translation of core clock components (CLOCK, NPAS2, BMAL1, BMAL2, PER1, PER2, PER3, CRY1 and CRY2) plays a critical role in rhythm generation, whereas delays imposed by post-translational modifications (PTMs) are important for determining the period (tau) of the rhythms (tau refers to the period of a rhythm and is the length, in time, of one complete cycle). A diurnal rhythm is synchronized with the day/night cycle, while the ultradian and infradian rhythms have a period shorter and longer than 24 hours, respectively. Disruptions in the circadian rhythms contribute to the pathology of cardiovascular diseases, cancer, metabolic syndromes and aging. A transcription/translation feedback loop (TTFL) forms the core of the molecular circadian clock mechanism. Transcription factors, CLOCK or NPAS2 and BMAL1 or BMAL2, form the positive limb of the feedback loop, act in the form of a heterodimer and activate the transcription of core clock genes and clock-controlled genes (involved in key metabolic processes), harboring E-box elements (5'-CACGTG-3') within their promoters. The core clock genes: PER1/2/3 and CRY1/2 which are transcriptional repressors form the negative limb of the feedback loop and interact with the CLOCK|NPAS2-BMAL1|BMAL2 heterodimer inhibiting its activity and thereby negatively regulating their own expression. This heterodimer also activates nuclear receptors NR1D1/2 and RORA/B/G, which form a second feedback loop and which activate and repress BMAL1 transcription, respectively. BMAL1 positively regulates myogenesis and negatively regulates adipogenesis via the transcriptional control of the genes of the canonical Wnt signaling pathway. Plays a role in normal pancreatic beta-cell function; regulates glucose-stimulated insulin secretion via the regulation of antioxidant genes NFE2L2/NRF2 and its targets SESN2, PRDX3, CCLC and CCLM. Negatively regulates the mTORC1 signaling pathway; regulates the expression of MTOR and DEPTOR. Controls diurnal oscillations of Ly6C inflammatory monocytes; rhythmic recruitment of the PRC2 complex imparts diurnal variation to chemokine expression that is necessary to sustain Ly6C monocyte rhythms. Regulates the expression of HSD3B2, STAR, PTGS2, CYP11A1, CYP19A1 and LHCGR in the ovary and also the genes involved in hair growth. Plays an important role in adult hippocampal neurogenesis by regulating the timely entry of neural stem/progenitor cells (NSPCs) into the cell cycle and the number of cell divisions that take place prior to cell-cycle exit. Regulates the circadian expression of CIART and KLF11. The CLOCK-BMAL1 heterodimer regulates the circadian expression of SERPINE1/PAI1, VWF, B3, CCRN4L/NOC, NAMPT, DBP, MYOD1, PPARGC1A, PPARGC1B, SIRT1, GYS2, F7, NGFR, GNRHR, BHLHE40/DEC1, ATF4, MTA1, KLF10 and also genes implicated in glucose and lipid metabolism. Promotes rhythmic chromatin opening, regulating the DNA accessibility of other transcription factors. The NPAS2-BMAL1 heterodimer positively regulates the expression of MAOA, F7 and LDHA and modulates the circadian rhythm of daytime contrast sensitivity by regulating the rhythmic expression of adenylate cyclase type 1 (ADCY1) in the retina. The preferred binding motif for the CLOCK-BMAL1 heterodimer is 5'-CACGTGA-3', which contains a flanking adenine nucleotide at the 3-prime end of the canonical 6-nucleotide E-box sequence. CLOCK specifically binds to the half-site 5'-CAC-3', while BMAL1 binds to the half-site 5'-GTGA-3'. The CLOCK-BMAL1 heterodimer also recognizes the non-canonical E-box motifs 5'-AACGTGA-3' and 5'-CATGTGA-3'. Essential for the rhythmic interaction of CLOCK with ASS1 and plays a critical role in positively regulating CLOCK-mediated acetylation of ASS1. Plays a role in protecting against lethal sepsis by limiting the expression of immune checkpoint protein CD274 in macrophages in a PKM2-dependent manner. Regulates the diurnal rhythms of skeletal muscle metabolism via transcriptional activation of genes promoting triglyceride synthesis (DGAT2) and metabolic efficiency (COQ10B). This is Basic helix-loop-helix ARNT-like protein 1 (Bmal1) from Nannospalax galili (Northern Israeli blind subterranean mole rat).